Here is a 90-residue protein sequence, read N- to C-terminus: Nodulation protein F (90 aa).

The region spanning 4–89 (QLESEIIGII…RHSGSHPRLA (86 aa)) is the Carrier domain. Position 46 is an O-(pantetheine 4'-phosphoryl)serine (S46). The segment at 65–90 (RDEHGRGVVGSPERRRHSGSHPRLAH) is disordered. The segment covering 78–90 (RRRHSGSHPRLAH) has biased composition (basic residues).

In terms of processing, 4'-phosphopantetheine is transferred from CoA to a specific serine of apo-NodF.

Its function is as follows. Proposed to synthesize nod factor fatty acyl chain. Involved in trans-2,trans-4,trans-6,cis-11-octadecatetraenoic acid biosynthesis. This Rhizobium meliloti (Ensifer meliloti) protein is Nodulation protein F (nodF).